The following is a 228-amino-acid chain: Sec-independent protein translocase protein TatB (228 aa).

A helical transmembrane segment spans residues 1 to 21; it reads MFDFGLGELVFVGIIALIVLG. Disordered stretches follow at residues 138–162 and 195–228; these read RSYA…AETD and PVPH…VRKS. The span at 206 to 228 shows a compositional bias: basic residues; the sequence is AISRKRDLRPKSRAKPKLRVRKS.

The protein belongs to the TatB family. In terms of assembly, the Tat system comprises two distinct complexes: a TatABC complex, containing multiple copies of TatA, TatB and TatC subunits, and a separate TatA complex, containing only TatA subunits. Substrates initially bind to the TatABC complex, which probably triggers association of the separate TatA complex to form the active translocon.

It localises to the cell inner membrane. Functionally, part of the twin-arginine translocation (Tat) system that transports large folded proteins containing a characteristic twin-arginine motif in their signal peptide across membranes. Together with TatC, TatB is part of a receptor directly interacting with Tat signal peptides. TatB may form an oligomeric binding site that transiently accommodates folded Tat precursor proteins before their translocation. In Neisseria meningitidis serogroup A / serotype 4A (strain DSM 15465 / Z2491), this protein is Sec-independent protein translocase protein TatB.